The primary structure comprises 240 residues: Pyridoxine 5'-phosphate synthase (240 aa).

A 3-amino-2-oxopropyl phosphate-binding site is contributed by asparagine 6. Residue 8–9 coordinates 1-deoxy-D-xylulose 5-phosphate; the sequence is DH. Arginine 17 provides a ligand contact to 3-amino-2-oxopropyl phosphate. The active-site Proton acceptor is histidine 42. The 1-deoxy-D-xylulose 5-phosphate site is built by arginine 44 and histidine 49. The Proton acceptor role is filled by glutamate 69. Residue threonine 99 coordinates 1-deoxy-D-xylulose 5-phosphate. The Proton donor role is filled by histidine 190. 3-amino-2-oxopropyl phosphate contacts are provided by residues glycine 191 and 212–213; that span reads GH.

Belongs to the PNP synthase family. In terms of assembly, homooctamer; tetramer of dimers.

The protein resides in the cytoplasm. It carries out the reaction 3-amino-2-oxopropyl phosphate + 1-deoxy-D-xylulose 5-phosphate = pyridoxine 5'-phosphate + phosphate + 2 H2O + H(+). Its pathway is cofactor biosynthesis; pyridoxine 5'-phosphate biosynthesis; pyridoxine 5'-phosphate from D-erythrose 4-phosphate: step 5/5. Catalyzes the complicated ring closure reaction between the two acyclic compounds 1-deoxy-D-xylulose-5-phosphate (DXP) and 3-amino-2-oxopropyl phosphate (1-amino-acetone-3-phosphate or AAP) to form pyridoxine 5'-phosphate (PNP) and inorganic phosphate. This chain is Pyridoxine 5'-phosphate synthase, found in Pseudomonas putida (strain ATCC 700007 / DSM 6899 / JCM 31910 / BCRC 17059 / LMG 24140 / F1).